A 425-amino-acid polypeptide reads, in one-letter code: GTPase Obg (425 aa).

The 158-residue stretch at 1–158 (MFIDKAKIYV…REIILELKLL (158 aa)) folds into the Obg domain. Residues 159–331 (ADVGLVGFPN…LMAEVSKTLA (173 aa)) form the OBG-type G domain. GTP contacts are provided by residues 165–172 (GFPNVGKS), 190–194 (FTTLK), 212–215 (DIPG), 282–285 (NKSD), and 312–314 (SAA). Mg(2+) contacts are provided by serine 172 and threonine 192. Residues 345–425 (LFIPEEKRFT…LNDFEFEFVI (81 aa)) form the OCT domain.

It belongs to the TRAFAC class OBG-HflX-like GTPase superfamily. OBG GTPase family. In terms of assembly, monomer. The cofactor is Mg(2+).

The protein localises to the cytoplasm. Functionally, an essential GTPase which binds GTP, GDP and possibly (p)ppGpp with moderate affinity, with high nucleotide exchange rates and a fairly low GTP hydrolysis rate. Plays a role in control of the cell cycle, stress response, ribosome biogenesis and in those bacteria that undergo differentiation, in morphogenesis control. This is GTPase Obg from Clostridium tetani (strain Massachusetts / E88).